Consider the following 983-residue polypeptide: Bifunctional glutamine synthetase adenylyltransferase/adenylyl-removing enzyme (983 aa).

The segment at Met-1–Ala-468 is adenylyl removase. The tract at residues Ala-473–Asp-983 is adenylyl transferase.

Belongs to the GlnE family. The cofactor is Mg(2+).

It carries out the reaction [glutamine synthetase]-O(4)-(5'-adenylyl)-L-tyrosine + phosphate = [glutamine synthetase]-L-tyrosine + ADP. The catalysed reaction is [glutamine synthetase]-L-tyrosine + ATP = [glutamine synthetase]-O(4)-(5'-adenylyl)-L-tyrosine + diphosphate. In terms of biological role, involved in the regulation of glutamine synthetase GlnA, a key enzyme in the process to assimilate ammonia. When cellular nitrogen levels are high, the C-terminal adenylyl transferase (AT) inactivates GlnA by covalent transfer of an adenylyl group from ATP to specific tyrosine residue of GlnA, thus reducing its activity. Conversely, when nitrogen levels are low, the N-terminal adenylyl removase (AR) activates GlnA by removing the adenylyl group by phosphorolysis, increasing its activity. The regulatory region of GlnE binds the signal transduction protein PII (GlnB) which indicates the nitrogen status of the cell. The polypeptide is Bifunctional glutamine synthetase adenylyltransferase/adenylyl-removing enzyme (Brucella melitensis biotype 1 (strain ATCC 23456 / CCUG 17765 / NCTC 10094 / 16M)).